The chain runs to 876 residues: AP-5 complex subunit beta-1 (876 aa).

In terms of assembly, probably part of the adaptor protein complex 5 (AP-5), a tetramer composed of AP5B1, AP5M1, AP5S1 and AP5Z1. Interacts with ZFYVE26 and SPG11.

Functionally, as part of AP-5, a probable fifth adaptor protein complex it may be involved in endosomal transport. In Mus musculus (Mouse), this protein is AP-5 complex subunit beta-1 (Ap5b1).